A 176-amino-acid polypeptide reads, in one-letter code: uncharacterized protein (176 aa).

This is an uncharacterized protein from Methanocaldococcus jannaschii (strain ATCC 43067 / DSM 2661 / JAL-1 / JCM 10045 / NBRC 100440) (Methanococcus jannaschii).